The sequence spans 262 residues: Putative cysteine-rich repeat secretory protein 24 (262 aa).

Positions 1-29 (MSLSSSVTKHLISASILAIVAMQLPSVHS) are cleaved as a signal peptide. 2 consecutive Gnk2-homologous domains span residues 39 to 141 (YLHH…SIYT) and 147 to 259 (YKNN…LYPF).

It belongs to the cysteine-rich repeat secretory protein family.

It localises to the secreted. The chain is Putative cysteine-rich repeat secretory protein 24 (CRRSP24) from Arabidopsis thaliana (Mouse-ear cress).